Reading from the N-terminus, the 436-residue chain is Adenosylmethionine-8-amino-7-oxononanoate aminotransferase (436 aa).

Trp66 is a substrate binding site. Residue 126–127 (GS) participates in pyridoxal 5'-phosphate binding. Tyr159 contacts substrate. Position 256 (Asp256) interacts with pyridoxal 5'-phosphate. Positions 285 and 318 each coordinate substrate. Residue Lys285 is modified to N6-(pyridoxal phosphate)lysine. Pyridoxal 5'-phosphate is bound at residue 319-320 (PT). Arg402 lines the substrate pocket.

It belongs to the class-III pyridoxal-phosphate-dependent aminotransferase family. BioA subfamily. In terms of assembly, homodimer. Pyridoxal 5'-phosphate is required as a cofactor.

Its subcellular location is the cytoplasm. The catalysed reaction is (8S)-8-amino-7-oxononanoate + S-adenosyl-L-methionine = S-adenosyl-4-methylsulfanyl-2-oxobutanoate + (7R,8S)-7,8-diammoniononanoate. Its pathway is cofactor biosynthesis; biotin biosynthesis; 7,8-diaminononanoate from 8-amino-7-oxononanoate (SAM route): step 1/1. Its function is as follows. Catalyzes the transfer of the alpha-amino group from S-adenosyl-L-methionine (SAM) to 7-keto-8-aminopelargonic acid (KAPA) to form 7,8-diaminopelargonic acid (DAPA). It is the only aminotransferase known to utilize SAM as an amino donor. This is Adenosylmethionine-8-amino-7-oxononanoate aminotransferase from Mycobacterium leprae (strain TN).